The following is a 43-amino-acid chain: Myotoxin-1 (43 aa).

Cystine bridges form between Cys-4–Cys-36, Cys-11–Cys-30, and Cys-18–Cys-37.

This sequence belongs to the crotamine-myotoxin family. As to quaternary structure, monomer. Expressed by the venom gland.

The protein resides in the secreted. Functionally, cationic peptide that possesses multiple functions. It acts as a cell-penetrating peptide (CPP), and as a potent voltage-gated potassium channel (Kv) inhibitor. It exhibits antimicrobial activities, hind limb paralysis, and severe muscle necrosis by a non-enzymatic mechanism. This Crotalus concolor (Midget faded rattlesnake) protein is Myotoxin-1.